A 277-amino-acid chain; its full sequence is Putative phosphoenolpyruvate synthase regulatory protein (277 aa).

An ADP-binding site is contributed by 157 to 164 (GVSRCGKT).

It belongs to the pyruvate, phosphate/water dikinase regulatory protein family. PSRP subfamily.

The catalysed reaction is [pyruvate, water dikinase] + ADP = [pyruvate, water dikinase]-phosphate + AMP + H(+). It carries out the reaction [pyruvate, water dikinase]-phosphate + phosphate + H(+) = [pyruvate, water dikinase] + diphosphate. In terms of biological role, bifunctional serine/threonine kinase and phosphorylase involved in the regulation of the phosphoenolpyruvate synthase (PEPS) by catalyzing its phosphorylation/dephosphorylation. This is Putative phosphoenolpyruvate synthase regulatory protein from Erwinia tasmaniensis (strain DSM 17950 / CFBP 7177 / CIP 109463 / NCPPB 4357 / Et1/99).